A 122-amino-acid chain; its full sequence is uncharacterized protein (122 aa).

A signal peptide spans 1-35 (MCCYVGKATKIFLCLAAALIVVGLVLGFGLAHRTW). The segment at 55–83 (YGGGGGGGDPLPATSGAGDTPPGVPLTEP) is disordered.

This is an uncharacterized protein from Oryza sativa subsp. japonica (Rice).